The primary structure comprises 152 residues: 6,7-dimethyl-8-ribityllumazine synthase (152 aa).

Residues Phe22, 54–56 (AFE), and 78–80 (AVI) each bind 5-amino-6-(D-ribitylamino)uracil. Residue 83-84 (ET) coordinates (2S)-2-hydroxy-3-oxobutyl phosphate. His86 acts as the Proton donor in catalysis. 5-amino-6-(D-ribitylamino)uracil is bound at residue Phe111. Arg125 is a (2S)-2-hydroxy-3-oxobutyl phosphate binding site.

This sequence belongs to the DMRL synthase family.

The catalysed reaction is (2S)-2-hydroxy-3-oxobutyl phosphate + 5-amino-6-(D-ribitylamino)uracil = 6,7-dimethyl-8-(1-D-ribityl)lumazine + phosphate + 2 H2O + H(+). Its pathway is cofactor biosynthesis; riboflavin biosynthesis; riboflavin from 2-hydroxy-3-oxobutyl phosphate and 5-amino-6-(D-ribitylamino)uracil: step 1/2. In terms of biological role, catalyzes the formation of 6,7-dimethyl-8-ribityllumazine by condensation of 5-amino-6-(D-ribitylamino)uracil with 3,4-dihydroxy-2-butanone 4-phosphate. This is the penultimate step in the biosynthesis of riboflavin. The protein is 6,7-dimethyl-8-ribityllumazine synthase of Limosilactobacillus reuteri (strain DSM 20016) (Lactobacillus reuteri).